Consider the following 528-residue polypeptide: Na(+)/H(+) antiporter NhaB (528 aa).

Transmembrane regions (helical) follow at residues 29 to 49 (LIIN…LLVI), 52 to 72 (IFTL…LLAI), 95 to 115 (VLLL…LLLF), 139 to 159 (AFLS…AVAV), 203 to 223 (LLMH…VGEP), 248 to 268 (VPVF…KIFG), 304 to 324 (AFIG…VGLI), 349 to 369 (EEAL…AVII), 390 to 410 (LVIF…VFVG), 448 to 468 (ATPN…APLI), and 476 to 496 (VWMA…AIEL).

It belongs to the NhaB Na(+)/H(+) (TC 2.A.34) antiporter family.

The protein localises to the cell inner membrane. It carries out the reaction 2 Na(+)(in) + 3 H(+)(out) = 2 Na(+)(out) + 3 H(+)(in). Na(+)/H(+) antiporter that extrudes sodium in exchange for external protons. The chain is Na(+)/H(+) antiporter NhaB from Shewanella woodyi (strain ATCC 51908 / MS32).